The sequence spans 122 residues: Large ribosomal subunit protein bL17 (122 aa).

This sequence belongs to the bacterial ribosomal protein bL17 family. As to quaternary structure, part of the 50S ribosomal subunit. Contacts protein L32.

The chain is Large ribosomal subunit protein bL17 from Neisseria gonorrhoeae (strain ATCC 700825 / FA 1090).